The chain runs to 254 residues: 5'-nucleotidase SurE (254 aa).

Residues Asp-8, Asp-9, Ser-38, and Asn-91 each coordinate a divalent metal cation.

The protein belongs to the SurE nucleotidase family. A divalent metal cation is required as a cofactor.

The protein localises to the cytoplasm. The enzyme catalyses a ribonucleoside 5'-phosphate + H2O = a ribonucleoside + phosphate. Its function is as follows. Nucleotidase that shows phosphatase activity on nucleoside 5'-monophosphates. This is 5'-nucleotidase SurE from Anaeromyxobacter sp. (strain Fw109-5).